A 152-amino-acid polypeptide reads, in one-letter code: Superoxide dismutase [Cu-Zn] (152 aa).

Cu cation-binding residues include H45, H47, and H62. C56 and C145 form a disulfide bridge. Residues H62, H70, H79, and D82 each coordinate Zn(2+). H119 contributes to the Cu cation binding site.

It belongs to the Cu-Zn superoxide dismutase family. As to quaternary structure, homodimer. Requires Cu cation as cofactor. Zn(2+) serves as cofactor.

The protein resides in the cytoplasm. It carries out the reaction 2 superoxide + 2 H(+) = H2O2 + O2. In terms of biological role, destroys radicals which are normally produced within the cells and which are toxic to biological systems. The chain is Superoxide dismutase [Cu-Zn] (SODCC) from Nicotiana plumbaginifolia (Leadwort-leaved tobacco).